The primary structure comprises 610 residues: Probable galacturonosyltransferase 5 (610 aa).

Topologically, residues M1–R6 are cytoplasmic. A helical; Signal-anchor for type II membrane protein transmembrane segment spans residues W7–V27. Residues S28–D610 lie on the Lumenal side of the membrane. A compositionally biased stretch (polar residues) spans L86–E101. The segment at L86–A170 is disordered. N-linked (GlcNAc...) asparagine glycosylation is found at N88 and N94. The segment covering E110–Q123 has biased composition (basic and acidic residues). Positions A124–A135 are enriched in polar residues. Over residues I139 to A170 the composition is skewed to basic and acidic residues. Residues N196, N338, N401, and N475 are each glycosylated (N-linked (GlcNAc...) asparagine).

The protein belongs to the glycosyltransferase 8 family. Expressed in roots, inflorescences, siliques, leaves and stems.

Its subcellular location is the golgi apparatus membrane. The protein operates within glycan metabolism; pectin biosynthesis. Its function is as follows. May be involved in pectin and/or xylans biosynthesis in cell walls. In Arabidopsis thaliana (Mouse-ear cress), this protein is Probable galacturonosyltransferase 5 (GAUT5).